Reading from the N-terminus, the 341-residue chain is CRISPR-associated endonuclease Cas1 (341 aa).

Mn(2+) is bound by residues E173, H242, and E257.

It belongs to the CRISPR-associated endonuclease Cas1 family. In terms of assembly, homodimer, forms a heterotetramer with a Cas2 homodimer. Mg(2+) is required as a cofactor. Mn(2+) serves as cofactor.

Functionally, CRISPR (clustered regularly interspaced short palindromic repeat), is an adaptive immune system that provides protection against mobile genetic elements (viruses, transposable elements and conjugative plasmids). CRISPR clusters contain spacers, sequences complementary to antecedent mobile elements, and target invading nucleic acids. CRISPR clusters are transcribed and processed into CRISPR RNA (crRNA). Acts as a dsDNA endonuclease. Involved in the integration of spacer DNA into the CRISPR cassette. The sequence is that of CRISPR-associated endonuclease Cas1 from Korarchaeum cryptofilum (strain OPF8).